A 300-amino-acid chain; its full sequence is Cation-efflux pump FieF (300 aa).

A run of 4 helical transmembrane segments spans residues 12–32, 39–59, 82–102, and 114–134; these read AALAATLVATLLLIIKIFAWW, ILAALVDSLVDIAASLTNLLV, AALAQSMFISGSALFLFLTGI, and PLVGIVVTVAALVTTLMLVTF. Positions 45 and 49 each coordinate Zn(2+). The Zn(2+) site is built by His-153 and Asp-157. 2 helical membrane-spanning segments follow: residues 156-176 and 182-202; these read SDVMMNGAILVALALSWYGLH and FALGIGVWILYSALRMGYEAI.

The protein belongs to the cation diffusion facilitator (CDF) transporter (TC 2.A.4) family. FieF subfamily. As to quaternary structure, homodimer.

The protein resides in the cell inner membrane. It carries out the reaction Zn(2+)(in) + H(+)(out) = Zn(2+)(out) + H(+)(in). The catalysed reaction is Cd(2+)(in) + H(+)(out) = Cd(2+)(out) + H(+)(in). It catalyses the reaction Fe(2+)(in) + H(+)(out) = Fe(2+)(out) + H(+)(in). Divalent metal cation transporter which exports Zn(2+), Cd(2+) and possibly Fe(2+). May be involved in zinc and iron detoxification by efflux. The polypeptide is Cation-efflux pump FieF (Cronobacter sakazakii (strain ATCC BAA-894) (Enterobacter sakazakii)).